Consider the following 498-residue polypeptide: Probable cytosol aminopeptidase (498 aa).

Residues K264 and D269 each coordinate Mn(2+). K276 is an active-site residue. Residues D287, D346, and E348 each contribute to the Mn(2+) site. R350 is an active-site residue.

Belongs to the peptidase M17 family. The cofactor is Mn(2+).

Its subcellular location is the cytoplasm. It catalyses the reaction Release of an N-terminal amino acid, Xaa-|-Yaa-, in which Xaa is preferably Leu, but may be other amino acids including Pro although not Arg or Lys, and Yaa may be Pro. Amino acid amides and methyl esters are also readily hydrolyzed, but rates on arylamides are exceedingly low.. The catalysed reaction is Release of an N-terminal amino acid, preferentially leucine, but not glutamic or aspartic acids.. Its function is as follows. Presumably involved in the processing and regular turnover of intracellular proteins. Catalyzes the removal of unsubstituted N-terminal amino acids from various peptides. The polypeptide is Probable cytosol aminopeptidase (Xanthobacter autotrophicus (strain ATCC BAA-1158 / Py2)).